A 1563-amino-acid polypeptide reads, in one-letter code: DNA-directed RNA polymerase subunit beta' (1563 aa).

Residues Cys61, Cys63, Cys76, and Cys79 each contribute to the Zn(2+) site. Mg(2+) contacts are provided by Asp588, Asp590, and Asp592. Zn(2+) is bound by residues Cys925, Cys999, Cys1006, and Cys1009.

This sequence belongs to the RNA polymerase beta' chain family. The RNAP catalytic core consists of 2 alpha, 1 beta, 1 beta' and 1 omega subunit. When a sigma factor is associated with the core the holoenzyme is formed, which can initiate transcription. Mg(2+) serves as cofactor. Requires Zn(2+) as cofactor.

It carries out the reaction RNA(n) + a ribonucleoside 5'-triphosphate = RNA(n+1) + diphosphate. In terms of biological role, DNA-dependent RNA polymerase catalyzes the transcription of DNA into RNA using the four ribonucleoside triphosphates as substrates. The polypeptide is DNA-directed RNA polymerase subunit beta' (Hydrogenobaculum sp. (strain Y04AAS1)).